A 179-amino-acid polypeptide reads, in one-letter code: Cytochrome b6-f complex iron-sulfur subunit 1 (179 aa).

The chain crosses the membrane as a helical span at residues 21 to 43 (LLTFGTVTGVALGALYPVVNYFI). A Rieske domain is found at 61 to 162 (GNDVSVSKFL…AKTENDKIVL (102 aa)). Residues Cys108, His110, Cys126, and His129 each coordinate [2Fe-2S] cluster. Cys113 and Cys128 form a disulfide bridge.

It belongs to the Rieske iron-sulfur protein family. In terms of assembly, the 4 large subunits of the cytochrome b6-f complex are cytochrome b6, subunit IV (17 kDa polypeptide, PetD), cytochrome f and the Rieske protein, while the 4 small subunits are PetG, PetL, PetM and PetN. The complex functions as a dimer. [2Fe-2S] cluster is required as a cofactor.

It localises to the cellular thylakoid membrane. It carries out the reaction 2 oxidized [plastocyanin] + a plastoquinol + 2 H(+)(in) = 2 reduced [plastocyanin] + a plastoquinone + 4 H(+)(out). In terms of biological role, component of the cytochrome b6-f complex, which mediates electron transfer between photosystem II (PSII) and photosystem I (PSI), cyclic electron flow around PSI, and state transitions. The chain is Cytochrome b6-f complex iron-sulfur subunit 1 from Nostoc sp. (strain PCC 7120 / SAG 25.82 / UTEX 2576).